Reading from the N-terminus, the 66-residue chain is ATP synthase F(0) complex subunit 8 (66 aa).

Met1 bears the N-formylmethionine mark. The chain crosses the membrane as a helical span at residues 8–24 (TWLTMILSMFLTLFIIF). N6-acetyllysine; alternate is present on Lys54. N6-succinyllysine; alternate is present on Lys54. An N6-acetyllysine modification is found at Lys57.

The protein belongs to the ATPase protein 8 family. In terms of assembly, component of the ATP synthase complex composed at least of ATP5F1A/subunit alpha, ATP5F1B/subunit beta, ATP5MC1/subunit c (homooctomer), MT-ATP6/subunit a, MT-ATP8/subunit 8, ATP5ME/subunit e, ATP5MF/subunit f, ATP5MG/subunit g, ATP5MK/subunit k, ATP5MJ/subunit j, ATP5F1C/subunit gamma, ATP5F1D/subunit delta, ATP5F1E/subunit epsilon, ATP5PF/subunit F6, ATP5PB/subunit b, ATP5PD/subunit d, ATP5PO/subunit OSCP. ATP synthase complex consists of a soluble F(1) head domain (subunits alpha(3) and beta(3)) - the catalytic core - and a membrane F(0) domain - the membrane proton channel (subunits c, a, 8, e, f, g, k and j). These two domains are linked by a central stalk (subunits gamma, delta, and epsilon) rotating inside the F1 region and a stationary peripheral stalk (subunits F6, b, d, and OSCP). Interacts with PRICKLE3.

It localises to the mitochondrion membrane. Subunit 8, of the mitochondrial membrane ATP synthase complex (F(1)F(0) ATP synthase or Complex V) that produces ATP from ADP in the presence of a proton gradient across the membrane which is generated by electron transport complexes of the respiratory chain. ATP synthase complex consist of a soluble F(1) head domain - the catalytic core - and a membrane F(1) domain - the membrane proton channel. These two domains are linked by a central stalk rotating inside the F(1) region and a stationary peripheral stalk. During catalysis, ATP synthesis in the catalytic domain of F(1) is coupled via a rotary mechanism of the central stalk subunits to proton translocation. In vivo, can only synthesize ATP although its ATP hydrolase activity can be activated artificially in vitro. Part of the complex F(0) domain. The sequence is that of ATP synthase F(0) complex subunit 8 from Bos taurus (Bovine).